Consider the following 865-residue polypeptide: Probable alpha/beta-glucosidase ARB_02101 (865 aa).

Residues 1–21 (MFGRTLALAAVFATTVLSAAA) form the signal peptide. 2 N-linked (GlcNAc...) asparagine glycosylation sites follow: Asn101 and Asn299. The active-site Nucleophile is the Asp428. Glu431 is an active-site residue. An N-linked (GlcNAc...) asparagine glycan is attached at Asn515. The active-site Proton donor is Asp548. Asn549, Asn585, and Asn748 each carry an N-linked (GlcNAc...) asparagine glycan.

It belongs to the glycosyl hydrolase 31 family.

The protein localises to the secreted. The enzyme catalyses Hydrolysis of terminal, non-reducing (1-&gt;4)-linked alpha-D-glucose residues with release of alpha-D-glucose.. It carries out the reaction Hydrolysis of terminal, non-reducing beta-D-glucosyl residues with release of beta-D-glucose.. Functionally, glucosidase involved in the degradation of cellulosic biomass. Has both alpha- and beta-glucosidase activity. The polypeptide is Probable alpha/beta-glucosidase ARB_02101 (Arthroderma benhamiae (strain ATCC MYA-4681 / CBS 112371) (Trichophyton mentagrophytes)).